The primary structure comprises 902 residues: Histone-lysine N-methyltransferase CLF (902 aa).

The span at Met-1–Ser-14 shows a compositional bias: low complexity. Disordered stretches follow at residues Met-1–Ser-33, Ser-73–Asn-107, and Gly-335–Glu-522. Basic and acidic residues-rich tracts occupy residues Glu-15 to Ser-33 and Gly-78 to Pro-95. The span at Thr-337 to Leu-357 shows a compositional bias: polar residues. Positions Asp-394 to Lys-403 are enriched in low complexity. The span at Gly-404–Asn-416 shows a compositional bias: basic residues. Residues Ser-438–Ser-449 show a composition bias toward low complexity. The segment covering Ala-459–Gly-473 has biased composition (polar residues). The region spanning Thr-531–Lys-581 is the SANT domain. One can recognise a CXC domain in the interval Arg-638–Asp-737. The SET domain occupies Gln-752 to Arg-867. Residue Tyr-866 participates in S-adenosyl-L-methionine binding. The span at Ala-875–Asn-890 shows a compositional bias: basic and acidic residues. Residues Ala-875–Ala-902 form a disordered region.

Belongs to the class V-like SAM-binding methyltransferase superfamily. Histone-lysine methyltransferase family. EZ subfamily. Probable component of a PcG complex. In plants, PcG complexes are probably composed of a member of the EZ family (CLF or MEA), FIE, and a member of the VEFS family (FIS2, VRN2 or EMF2). Interacts with FIE. Interacts with RING1A. Binds to ALP1. Interacts with BLI. Binds to ATX1 in the nucleus. Interacts with EOL1. Interacts (via SANT domain) with HXK1 in the nucleus. As to expression, strongly expressed throughout the apical meristem, leaf primordia, and leaves of 7-8 day-old seedling. Weakly expressed in the vasculature of hypocotyl. Strongly expressed throughout the young stages 1 and 2 floral meristems that arose on the flanks of the apex. In stage 3 and 4 flowers, it is expressed in the emerging sepal primordia and in the dome of the floral meristem. During stages 6 and 7, it is strongly expressed in developing petal and stamen, and weakly expressed in the sepals. Late in floral development, at stage 12, it is weakly expressed in all floral whorls, and expressed at intermediate level in petals and ovules.

It is found in the nucleus. The catalysed reaction is L-lysyl-[histone] + S-adenosyl-L-methionine = N(6)-methyl-L-lysyl-[histone] + S-adenosyl-L-homocysteine + H(+). Polycomb group (PcG) protein. Catalytic subunit of some PcG multiprotein complex, which methylates 'Lys-27' of histone H3, leading to transcriptional repression of the affected target genes, mainly abscisic acid (ABA) responsive elements. Required to regulate floral development by repressing the AGAMOUS homeotic gene in leaves, inflorescence stems and flowers. Together with ATX1, modulates AG nucleosome methylation statement. Regulates the antero-posterior organization of the endosperm, as well as the division and elongation rates of leaf cells. PcG proteins act by forming multiprotein complexes, which are required to maintain the transcriptionally repressive state of homeotic genes throughout development. PcG proteins are not required to initiate repression, but to maintain it during later stages of development. Forms a nuclear complex with EZA1/SWN and HXK1 to target common glucose-responsive genes and regulate glucose signaling by glucose-mediated gene repression. Affects the recruitment of HXK1 to the target chromatin. This Arabidopsis thaliana (Mouse-ear cress) protein is Histone-lysine N-methyltransferase CLF.